Consider the following 139-residue polypeptide: Putative nickel-responsive regulator (139 aa).

Ni(2+)-binding residues include His79, His90, His92, and Cys98.

It belongs to the transcriptional regulatory CopG/NikR family. Ni(2+) is required as a cofactor.

Functionally, transcriptional regulator. The chain is Putative nickel-responsive regulator from Nitratidesulfovibrio vulgaris (strain ATCC 29579 / DSM 644 / CCUG 34227 / NCIMB 8303 / VKM B-1760 / Hildenborough) (Desulfovibrio vulgaris).